The following is a 176-amino-acid chain: Bifunctional protein PyrR (176 aa).

Residues 93–105 (VILVDDVLYTGRT) carry the PRPP-binding motif.

Belongs to the purine/pyrimidine phosphoribosyltransferase family. PyrR subfamily. In terms of assembly, homodimer and homohexamer; in equilibrium.

It carries out the reaction UMP + diphosphate = 5-phospho-alpha-D-ribose 1-diphosphate + uracil. Its function is as follows. Regulates transcriptional attenuation of the pyrimidine nucleotide (pyr) operon by binding in a uridine-dependent manner to specific sites on pyr mRNA. This disrupts an antiterminator hairpin in the RNA and favors formation of a downstream transcription terminator, leading to a reduced expression of downstream genes. In terms of biological role, also displays a weak uracil phosphoribosyltransferase activity which is not physiologically significant. The sequence is that of Bifunctional protein PyrR from Streptococcus mutans serotype c (strain ATCC 700610 / UA159).